Reading from the N-terminus, the 171-residue chain is Peptide deformylase 1 (171 aa).

Cysteine 99 and histidine 141 together coordinate Fe cation. Residue glutamate 142 is part of the active site.

This sequence belongs to the polypeptide deformylase family. The cofactor is Fe(2+).

The catalysed reaction is N-terminal N-formyl-L-methionyl-[peptide] + H2O = N-terminal L-methionyl-[peptide] + formate. Its function is as follows. Removes the formyl group from the N-terminal Met of newly synthesized proteins. Requires at least a dipeptide for an efficient rate of reaction. N-terminal L-methionine is a prerequisite for activity but the enzyme has broad specificity at other positions. The chain is Peptide deformylase 1 from Xanthomonas axonopodis pv. citri (strain 306).